We begin with the raw amino-acid sequence, 519 residues long: Cytochrome P450 52A12 (519 aa).

Cys-467 lines the heme pocket.

It belongs to the cytochrome P450 family. Heme serves as cofactor.

The protein localises to the membrane. Functionally, together with an NADPH cytochrome P450 the enzyme system catalyzes the terminal hydroxylation as the first step in the assimilation of alkanes and fatty acids. This Debaryomyces hansenii (Yeast) protein is Cytochrome P450 52A12 (CYP52A12).